A 375-amino-acid chain; its full sequence is Alpha-2,8-sialyltransferase 8B (375 aa).

At 1–6 (MQLQFR) the chain is on the cytoplasmic side. The helical; Signal-anchor for type II membrane protein transmembrane segment at 7–23 (SWMLAALTLLVVFLIFA) threads the bilayer. Residues 24-375 (DISEIEEEIG…LTVGQCDGAT (352 aa)) are Lumenal-facing. N-linked (GlcNAc...) asparagine glycosylation is found at Asn-60, Asn-72, Asn-89, and Asn-134. 2 disulfides stabilise this stretch: Cys-157–Cys-307 and Cys-171–Cys-371. CMP-N-acetyl-beta-neuraminate contacts are provided by Asn-162 and Asn-185. Asn-219 and Asn-234 each carry an N-linked (GlcNAc...) asparagine glycan. Residues Thr-294, Thr-295, Gly-296, Trp-316, Tyr-329, and His-330 each contribute to the CMP-N-acetyl-beta-neuraminate site. His-346 acts as the Proton donor/acceptor in catalysis.

The protein belongs to the glycosyltransferase 29 family. In terms of processing, autopolysialylated. Autopolysialylation is not a prerequisite for the polysialylation acitity, but enhances the polysialylation acitity.

The protein localises to the golgi apparatus membrane. It is found in the secreted. Its subcellular location is the cell membrane. It catalyses the reaction [N-acetyl-alpha-D-neuraminosyl-(2-&gt;8)](n) + CMP-N-acetyl-beta-neuraminate = [N-acetyl-alpha-D-neuraminosyl-(2-&gt;8)](n+1) + CMP + H(+). It participates in protein modification; protein glycosylation. Functionally, catalyzes the transfer of a sialic acid from a CMP-linked sialic acid donor onto a terminal alpha-2,3-, alpha-2,6-, or alpha-2,8-linked sialic acid of an N-linked glycan acceptor through alpha-2,8-linkages. Therefore, participates in polysialic acid synthesis on various sialylated N-acetyllactosaminyl oligosaccharides (alpha-2,3-, alpha-2,6-, or alpha-2,8-linked sialic acid), including NCAM1, NCAM1 N-glycans, FETUB N-glycans, and to a lesser extent sialylparagloboside (SPG) and AHSG, which does not require the initial addition of an alpha 2,8-sialic acid. However, does not exhibit sialic acid-polymerase activity. Catalyzes polysialic acid synthesis in the hippocampal on NCAM1 and supports neurite outgrowth. ST8SIA2-mediated polysialylation influences on oligodendrocyte differentiation and may promote the integrity of myelin and axons. This chain is Alpha-2,8-sialyltransferase 8B, found in Mus musculus (Mouse).